The chain runs to 152 residues: UPF0756 membrane protein Daud_1310 (152 aa).

The next 4 membrane-spanning stretches (helical) occupy residues 14–34 (LVGV…LLFI), 51–71 (LELG…NGKI), 76–96 (IIYN…ALAT), and 112–132 (IIFG…GMPV).

This sequence belongs to the UPF0756 family.

Its subcellular location is the cell membrane. The protein is UPF0756 membrane protein Daud_1310 of Desulforudis audaxviator (strain MP104C).